The following is a 602-amino-acid chain: Threonine--tRNA ligase (602 aa).

A catalytic region spans residues 208–499; sequence DHRKLGTELK…LTEHCAGEFP (292 aa). Cysteine 300, histidine 351, and histidine 476 together coordinate Zn(2+).

This sequence belongs to the class-II aminoacyl-tRNA synthetase family. As to quaternary structure, homodimer. The cofactor is Zn(2+).

It localises to the cytoplasm. The catalysed reaction is tRNA(Thr) + L-threonine + ATP = L-threonyl-tRNA(Thr) + AMP + diphosphate + H(+). Catalyzes the attachment of threonine to tRNA(Thr) in a two-step reaction: L-threonine is first activated by ATP to form Thr-AMP and then transferred to the acceptor end of tRNA(Thr). Also edits incorrectly charged L-seryl-tRNA(Thr). The polypeptide is Threonine--tRNA ligase (Campylobacter jejuni subsp. jejuni serotype O:6 (strain 81116 / NCTC 11828)).